The sequence spans 216 residues: Guanylate kinase (216 aa).

One can recognise a Guanylate kinase-like domain in the interval 11 to 189 (GVLIVISGPS…AVKKIEAILL (179 aa)). Position 18–25 (18–25 (GPSGAGKG)) interacts with ATP.

Belongs to the guanylate kinase family.

The protein resides in the cytoplasm. It carries out the reaction GMP + ATP = GDP + ADP. Essential for recycling GMP and indirectly, cGMP. This is Guanylate kinase from Clostridium perfringens (strain SM101 / Type A).